Consider the following 234-residue polypeptide: LexA repressor (234 aa).

Positions Arg41–Lys61 form a DNA-binding region, H-T-H motif. Active-site for autocatalytic cleavage activity residues include Ser152 and Lys189.

This sequence belongs to the peptidase S24 family. In terms of assembly, homodimer.

It carries out the reaction Hydrolysis of Ala-|-Gly bond in repressor LexA.. Functionally, represses a number of genes involved in the response to DNA damage (SOS response), including recA and lexA. In the presence of single-stranded DNA, RecA interacts with LexA causing an autocatalytic cleavage which disrupts the DNA-binding part of LexA, leading to derepression of the SOS regulon and eventually DNA repair. The sequence is that of LexA repressor from Polaromonas naphthalenivorans (strain CJ2).